The following is a 242-amino-acid chain: Eukaryotic translation initiation factor 4E type 1B (242 aa).

The interval Met1 to Leu42 is disordered. The span at Trp16 to Ala25 shows a compositional bias: acidic residues. Residues Gly32–Thr41 are compositionally biased toward polar residues. Residues His62 to Gln65 are EIF4EBP1/2/3 binding. Residue Trp81 to Gln82 coordinates mRNA. Positions Trp98–Ser102 are EIF4EBP1/2/3 binding. Trp127 to Glu128 provides a ligand contact to mRNA. Positions Glu157–Gly164 are EIF4EBP1/2/3 binding. Residues Arg182–Lys187 and Thr230–Ser232 each bind mRNA.

It belongs to the eukaryotic initiation factor 4E family. EIF4F is a multi-subunit complex, the composition of which varies with external and internal environmental conditions. It is composed of at least EIF4A, EIF4E and EIF4G.

Functionally, recognizes and binds the 7-methylguanosine-containing mRNA cap during an early step in the initiation of protein synthesis and facilitates ribosome binding by inducing the unwinding of the mRNAs secondary structure. The chain is Eukaryotic translation initiation factor 4E type 1B (EIF4E1B) from Homo sapiens (Human).